The chain runs to 359 residues: Dihydroorotate dehydrogenase (quinone) (359 aa).

Residues 68 to 72 (AGFDK) and Ala92 contribute to the FMN site. Substrate is bound at residue Lys72. Residue 117 to 121 (NAYGF) coordinates substrate. 2 residues coordinate FMN: Asn146 and Asn179. Asn179 provides a ligand contact to substrate. Ser182 (nucleophile) is an active-site residue. Asn184 is a binding site for substrate. FMN-binding residues include Lys215 and Thr243. Position 244–245 (244–245 (NT)) interacts with substrate. Residues Gly263, Gly292, and 313–314 (YT) each bind FMN.

Belongs to the dihydroorotate dehydrogenase family. Type 2 subfamily. In terms of assembly, monomer. FMN serves as cofactor.

The protein resides in the cell membrane. It catalyses the reaction (S)-dihydroorotate + a quinone = orotate + a quinol. It participates in pyrimidine metabolism; UMP biosynthesis via de novo pathway; orotate from (S)-dihydroorotate (quinone route): step 1/1. In terms of biological role, catalyzes the conversion of dihydroorotate to orotate with quinone as electron acceptor. The chain is Dihydroorotate dehydrogenase (quinone) from Nautilia profundicola (strain ATCC BAA-1463 / DSM 18972 / AmH).